Here is a 102-residue protein sequence, read N- to C-terminus: Thioredoxin (102 aa).

Residues 2–102 (LHIDELTFEN…ILIHTINKYL (101 aa)) enclose the Thioredoxin domain. Residues Cys-29 and Cys-32 each act as nucleophile in the active site. Cysteines 29 and 32 form a disulfide.

It belongs to the thioredoxin family.

Its subcellular location is the plastid. The protein localises to the chloroplast. In terms of biological role, participates in various redox reactions through the reversible oxidation of its active center dithiol to a disulfide and catalyzes dithiol-disulfide exchange reactions. This chain is Thioredoxin (trxA), found in Cyanidioschyzon merolae (strain NIES-3377 / 10D) (Unicellular red alga).